A 1045-amino-acid polypeptide reads, in one-letter code: Mitotic deacetylase-associated SANT domain protein (1045 aa).

Met1 bears the N-acetylmethionine mark. Disordered regions lie at residues 1 to 68 and 99 to 159; these read MNLQ…PPPS and NSVM…PTYY. The segment covering 132 to 146 has biased composition (polar residues); sequence STWNCHSLSLYSATK. Lys166 participates in a covalent cross-link: Glycyl lysine isopeptide (Lys-Gly) (interchain with G-Cter in SUMO2). Asymmetric dimethylarginine is present on Arg193. Disordered regions lie at residues 228 to 264, 276 to 305, 330 to 349, 378 to 397, and 410 to 441; these read QVFR…QQAA, SMPQ…AHHS, APQP…SRRL, HHWP…HPEA, and LPDG…STGD. The span at 240–264 shows a compositional bias: low complexity; that stretch reads VAAFPPQKQQQQQQPQQQQQQQQAA. Basic and acidic residues predominate over residues 412 to 425; it reads DGERLAPNGREREA. Arg447 bears the Omega-N-methylarginine mark. The residue at position 461 (Ser461) is a Phosphoserine. The interval 543-563 is disordered; that stretch reads QAGGLDEDGKGPEQNPAEHKP. Residues 549–563 are compositionally biased toward basic and acidic residues; the sequence is EDGKGPEQNPAEHKP. Lys590 participates in a covalent cross-link: Glycyl lysine isopeptide (Lys-Gly) (interchain with G-Cter in SUMO1); alternate. A Glycyl lysine isopeptide (Lys-Gly) (interchain with G-Cter in SUMO2); alternate cross-link involves residue Lys590. A Phosphothreonine modification is found at Thr655. Ser661 bears the Phosphoserine mark. Position 704 is a phosphothreonine (Thr704). Ser709 bears the Phosphoserine mark. At Thr715 the chain carries Phosphothreonine. Residues 721–813 enclose the ELM2 domain; the sequence is PRINVGSRFQ…ETLNKLLLKK (93 aa). The SANT domain occupies 828–879; that stretch reads TGSDQWKMAERKLFNKGIAIYKKDFFLVQKLIQTKTVAQCVEFYYTYKKQVK. The tract at residues 887–1045 is disordered; the sequence is TFGDVDTSDE…NTFPCKKCGR (159 aa). Composition is skewed to basic and acidic residues over residues 894-909 and 919-942; these read SDEK…DIKT and PRRE…RKEG. Ser923 is modified (phosphoserine). A compositionally biased stretch (acidic residues) spans 943-957; it reads EEEVPEIQEKEEQEE. Residues 970-980 are compositionally biased toward polar residues; it reads ATQTLQANESA.

As to quaternary structure, interacts with DNTTIP1. Identified in a histone deacetylase complex that contains DNTTIP1, HDAC1 and MIDEAS; this complex assembles into a tetramer that contains four copies of each protein chain.

Its subcellular location is the nucleus. The polypeptide is Mitotic deacetylase-associated SANT domain protein (Homo sapiens (Human)).